Here is a 427-residue protein sequence, read N- to C-terminus: Fc receptor-like B (427 aa).

The first 17 residues, 1 to 17 (MWMLAALLLLVPRSGKA), serve as a signal peptide directing secretion. Ig-like C2-type domains follow at residues 23 to 101 (PVLT…LSVS) and 103 to 189 (DWLI…VAVT). 2 cysteine pairs are disulfide-bonded: Cys-44–Cys-85 and Cys-124–Cys-168. Asn-152 carries N-linked (GlcNAc...) asparagine glycosylation. The span at 401–418 (TPETPNSHVTVNPATPET) shows a compositional bias: polar residues. The tract at residues 401–427 (TPETPNSHVTVNPATPETTVMEGRVDS) is disordered.

As to expression, expressed at low levels. Expressed in B-lymphocytes. Detected in spleen, lymph node, kidney, lung and brain.

The protein localises to the cytoplasm. The protein resides in the endoplasmic reticulum. This chain is Fc receptor-like B (Fcrlb), found in Mus musculus (Mouse).